Reading from the N-terminus, the 1023-residue chain is Sodium/potassium-transporting ATPase subunit alpha-1 (1023 aa).

A propeptide spanning residues 1-5 is cleaved from the precursor; that stretch reads MGKGV. Over residues 1–11 the composition is skewed to basic and acidic residues; the sequence is MGKGVGRDKYE. Positions 1 to 39 are disordered; that stretch reads MGKGVGRDKYEPAAVSEQGDKKGKKGKKDRDMDELKKEV. At 6–87 the chain is on the cytoplasmic side; it reads GRDKYEPAAV…NALTPPPTTP (82 aa). K9 is subject to N6-acetyllysine. Y10 bears the Phosphotyrosine mark. S16 is subject to Phosphoserine. K21 is subject to N6-acetyllysine. Positions 28–39 are enriched in basic and acidic residues; the sequence is KDRDMDELKKEV. Residues S40 and S47 each carry the phosphoserine modification. Positions 82-84 are phosphoinositide-3 kinase binding; the sequence is PPP. Residues 88-108 form a helical membrane-spanning segment; that stretch reads EWIKFCRQLFGGFSMLLWIGA. The Extracellular segment spans residues 109-131; that stretch reads ILCFLAYSIQAATEEEPQNDNLY. A helical transmembrane segment spans residues 132-152; sequence LGVVLSAVVIITGCFSYYQEA. Topologically, residues 153 to 288 are cytoplasmic; sequence KSSKIMESFK…GGQTPIAAEI (136 aa). The interval 216 to 235 is disordered; the sequence is SSLTGESEPQTRSPDFTNEN. Phosphoserine is present on S228. Y260 bears the Phosphotyrosine mark. Residues 289–308 form a helical membrane-spanning segment; that stretch reads EHFIHIITGVAVFLGVSFFI. Residues 309 to 320 are Extracellular-facing; sequence LSLILEYTWLEA. The helical transmembrane segment at 321 to 338 threads the bilayer; sequence VIFLIGIIVANVPEGLLA. The Cytoplasmic portion of the chain corresponds to 339–772; that stretch reads TVTVCLTLTA…EEGRLIFDNL (434 aa). The 4-aspartylphosphate intermediate role is filled by D376. S452 and S484 each carry phosphoserine. K487 provides a ligand contact to ATP. Y542 carries the post-translational modification Phosphotyrosine. The interval 596–717 is mediates interaction with SCN7A; that stretch reads RAAVPDAVGK…QGAIVAVTGD (122 aa). At K661 the chain carries N6-succinyllysine. S668 and S675 each carry phosphoserine. The Mg(2+) site is built by D717 and D721. A helical transmembrane segment spans residues 773–792; that stretch reads KKSIAYTLTSNIPEITPFLI. The Extracellular portion of the chain corresponds to 793–802; sequence FIIANIPLPL. A helical transmembrane segment spans residues 803 to 823; it reads GTVTILCIDLGTDMVPAISLA. Over 824 to 843 the chain is Cytoplasmic; sequence YEQAESDIMKRQPRNPKTDK. A helical membrane pass occupies residues 844–866; that stretch reads LVNERLISMAYGQIGMIQALGGF. The Extracellular portion of the chain corresponds to 867–918; the sequence is FTYFVILAENGFLPIHLLGLRVDWDDRWINDVEDSYGQQWTYEQRKIVEFTC. A helical transmembrane segment spans residues 919–938; it reads HTAFFVSIVVVQWADLVICK. At 939-951 the chain is on the cytoplasmic side; it reads TRRNSVFQQGMKN. S943 is subject to Phosphoserine; by PKA. Residues 952-970 traverse the membrane as a helical segment; it reads KILIFGLFEETALAAFLSY. At 971 to 985 the chain is on the extracellular side; the sequence is CPGMGVALRMYPLKP. A helical membrane pass occupies residues 986–1006; sequence TWWFCAFPYSLLIFVYDEVRK. Over 1007–1023 the chain is Cytoplasmic; it reads LIIRRRPGGWVEKETYY.

It belongs to the cation transport ATPase (P-type) (TC 3.A.3) family. Type IIC subfamily. The sodium/potassium-transporting ATPase is composed of a catalytic alpha subunit, an auxiliary non-catalytic beta subunit and an additional regulatory subunit. Interacts with regulatory subunit FXYD1. Interacts with regulatory subunit FXYD3. Interacts with SIK1. Binds the HLA class II histocompatibility antigen DR1. Interacts with SLC35G1 and STIM1. Interacts with CLN3; this interaction regulates the sodium/potassium-transporting ATPase complex localization at the plasma membrane. Interacts with SCN7A; activates ATP1A1 P-type sodium:potassium-exchanging transporter activity which indirectly signals to nearby neurons to regulate sodium homeostasis. Phosphorylation on Tyr-10 modulates pumping activity. Phosphorylation of Ser-943 by PKA modulates the response of ATP1A1 to PKC. Dephosphorylation by protein phosphatase 2A (PP2A) following increases in intracellular sodium, leading to increase catalytic activity.

The protein resides in the cell membrane. It localises to the basolateral cell membrane. The protein localises to the sarcolemma. It is found in the cell projection. Its subcellular location is the axon. The protein resides in the melanosome. It carries out the reaction K(+)(out) + Na(+)(in) + ATP + H2O = K(+)(in) + Na(+)(out) + ADP + phosphate + H(+). Functionally, this is the catalytic component of the active enzyme, which catalyzes the hydrolysis of ATP coupled with the exchange of sodium and potassium ions across the plasma membrane. This action creates the electrochemical gradient of sodium and potassium ions, providing the energy for active transport of various nutrients. Could also be part of an osmosensory signaling pathway that senses body-fluid sodium levels and controls salt intake behavior as well as voluntary water intake to regulate sodium homeostasis. This chain is Sodium/potassium-transporting ATPase subunit alpha-1 (ATP1A1), found in Homo sapiens (Human).